Reading from the N-terminus, the 263-residue chain is Purine nucleoside phosphorylase SACOL1200 (263 aa).

Zn(2+) is bound by residues histidine 79, cysteine 124, and histidine 141.

It belongs to the purine nucleoside phosphorylase YfiH/LACC1 family. In terms of assembly, homodimer. Requires Cu(2+) as cofactor. It depends on Zn(2+) as a cofactor.

It catalyses the reaction adenosine + phosphate = alpha-D-ribose 1-phosphate + adenine. The catalysed reaction is S-methyl-5'-thioadenosine + phosphate = 5-(methylsulfanyl)-alpha-D-ribose 1-phosphate + adenine. It carries out the reaction inosine + phosphate = alpha-D-ribose 1-phosphate + hypoxanthine. The enzyme catalyses adenosine + H2O + H(+) = inosine + NH4(+). Purine nucleoside enzyme that catalyzes the phosphorolysis of adenosine and inosine nucleosides, yielding D-ribose 1-phosphate and the respective free bases, adenine and hypoxanthine. Also catalyzes the phosphorolysis of S-methyl-5'-thioadenosine into adenine and S-methyl-5-thio-alpha-D-ribose 1-phosphate. Also has adenosine deaminase activity. The chain is Purine nucleoside phosphorylase SACOL1200 from Staphylococcus aureus (strain COL).